The primary structure comprises 185 residues: Potassium-transporting ATPase KdpC subunit (185 aa).

A helical membrane pass occupies residues 11 to 31; the sequence is LALLMTLVTGALYPLAVTGIA.

This sequence belongs to the KdpC family. As to quaternary structure, the system is composed of three essential subunits: KdpA, KdpB and KdpC.

The protein localises to the cell inner membrane. In terms of biological role, part of the high-affinity ATP-driven potassium transport (or Kdp) system, which catalyzes the hydrolysis of ATP coupled with the electrogenic transport of potassium into the cytoplasm. This subunit acts as a catalytic chaperone that increases the ATP-binding affinity of the ATP-hydrolyzing subunit KdpB by the formation of a transient KdpB/KdpC/ATP ternary complex. The sequence is that of Potassium-transporting ATPase KdpC subunit from Pseudomonas putida (strain ATCC 47054 / DSM 6125 / CFBP 8728 / NCIMB 11950 / KT2440).